Reading from the N-terminus, the 247-residue chain is Ribonuclease 3 (247 aa).

Positions 23 to 149 (HADLLERLGV…LLGAIFRQHG (127 aa)) constitute an RNase III domain. E62 lines the Mg(2+) pocket. The active site involves D66. Residues D135 and E138 each contribute to the Mg(2+) site. E138 is an active-site residue. Residues 176-244 (DWKTTLQEEL…ARQAFLKLRE (69 aa)) enclose the DRBM domain.

This sequence belongs to the ribonuclease III family. In terms of assembly, homodimer. Mg(2+) is required as a cofactor.

The protein localises to the cytoplasm. The enzyme catalyses Endonucleolytic cleavage to 5'-phosphomonoester.. Its function is as follows. Digests double-stranded RNA. Involved in the processing of primary rRNA transcript to yield the immediate precursors to the large and small rRNAs (23S and 16S). Processes some mRNAs, and tRNAs when they are encoded in the rRNA operon. Processes pre-crRNA and tracrRNA of type II CRISPR loci if present in the organism. This is Ribonuclease 3 from Corynebacterium efficiens (strain DSM 44549 / YS-314 / AJ 12310 / JCM 11189 / NBRC 100395).